Reading from the N-terminus, the 383-residue chain is Odorant receptor 94b (383 aa).

Residues 1 to 41 (MESTNRLSAIQTLLVIQRWIGLLKWENEGEDGVLTWLKRIY) are Cytoplasmic-facing. A helical membrane pass occupies residues 42–62 (PFVLHLPLTFTYIALMWYEAI). Residues 63-70 (TSSDFEEA) lie on the Extracellular side of the membrane. A helical transmembrane segment spans residues 71 to 91 (GQVLYMSITELALVTKLLNIW). Over 92-130 (YRRHEAASLIHELQHDPAFNLRNSEEIKFWQQNQRNFKR) the chain is Cytoplasmic. The helical transmembrane segment at 131–151 (IFYWYIWGSLFVAVMGYISVF) threads the bilayer. Over 152–174 (FQEDYELPFGYYVPFEWRTRERY) the chain is Extracellular. The helical transmembrane segment at 175–195 (FYAWGYNVVAMTLCCLSNILL) threads the bilayer. The Cytoplasmic portion of the chain corresponds to 196–250 (DTLGCYFMFHIASLFRLLGMRLEALKNAAEEKARPELRRIFQLHTKVRRLTRECE). Residues 251–271 (VLVSPYVLSQVVFSAFIICFS) traverse the membrane as a helical segment. Topologically, residues 272–284 (AYRLVHMGFKQRP) are extracellular. The helical transmembrane segment at 285-305 (GLFVTTVQFVAVMIVQIFLPC) threads the bilayer. The Cytoplasmic segment spans residues 306-358 (YYGNELTFHANALTNSVFGTNWLEYSVGTRKLLNCYMEFLKRPVKVRAGVFFE). The chain crosses the membrane as a helical span at residues 359–379 (IGLPIFVKTINNAYSFFALLL). Topologically, residues 380 to 383 (KISK) are extracellular.

The protein belongs to the insect chemoreceptor superfamily. Heteromeric odorant receptor channel (TC 1.A.69) family. Or2a subfamily. In terms of assembly, interacts with Orco. Complexes exist early in the endomembrane system in olfactory sensory neurons (OSNs), coupling these complexes to the conserved ciliary trafficking pathway.

It localises to the cell membrane. Functionally, odorant receptor which mediates acceptance or avoidance behavior, depending on its substrates. The odorant receptor repertoire encodes a large collection of odor stimuli that vary widely in identity, intensity, and duration. May form a complex with Orco to form odorant-sensing units, providing sensitive and prolonged odorant signaling and calcium permeability. In Drosophila melanogaster (Fruit fly), this protein is Odorant receptor 94b (Or94b).